A 348-amino-acid chain; its full sequence is Phosphoribosylformylglycinamidine cyclo-ligase (348 aa).

Belongs to the AIR synthase family.

The protein localises to the cytoplasm. The catalysed reaction is 2-formamido-N(1)-(5-O-phospho-beta-D-ribosyl)acetamidine + ATP = 5-amino-1-(5-phospho-beta-D-ribosyl)imidazole + ADP + phosphate + H(+). The protein operates within purine metabolism; IMP biosynthesis via de novo pathway; 5-amino-1-(5-phospho-D-ribosyl)imidazole from N(2)-formyl-N(1)-(5-phospho-D-ribosyl)glycinamide: step 2/2. The chain is Phosphoribosylformylglycinamidine cyclo-ligase from Roseobacter denitrificans (strain ATCC 33942 / OCh 114) (Erythrobacter sp. (strain OCh 114)).